Here is a 45-residue protein sequence, read N- to C-terminus: Defensin Tk-AMP-D4 (45 aa).

Cystine bridges form between Cys-3/Cys-45, Cys-14/Cys-34, Cys-20/Cys-39, and Cys-24/Cys-41.

In terms of biological role, plant defense peptide. This is Defensin Tk-AMP-D4 from Triticum kiharae (Wheat).